The sequence spans 176 residues: Scytalone dehydratase-like protein AacuK (176 aa).

Substrate-binding residues include tyrosine 26 and tyrosine 46. Active-site residues include histidine 81 and histidine 107.

It belongs to the scytalone dehydratase family.

It functions in the pathway secondary metabolite biosynthesis. Scytalone dehydratase-like protein; part of the gene cluster that mediates the biosynthesis of the tetrahydroxanthone dimer secalonic acid D. The pathway begins with the synthesis of atrochrysone thioester by the polyketide synthase AacuL. The atrochrysone carboxyl ACP thioesterase AacuM then breaks the thioester bond and releases the atrochrysone carboxylic acid from AacuL. Atrochrysone carboxylic acid is decarboxylated by the decarboxylase AacuI, and oxidized by the anthrone oxygenase AacuG to yield emodin. Emodin is then reduced to emodin hydroquinone by a yet unidentified oxidoreductase. A-ring reduction by the short chain dehydrogenase AacuN, dehydration by the scytalone dehydratase-like protein AacuK and probable spontaneous re-oxidation, results in overall deoxygenation to chrysophanol. Baeyer-Villiger oxidation by the Baeyer-Villiger monooxygenase (BVMO) AacuH then yields monodictyphenone. Monodictyphenone is transformed into compounds with the tetrahydroxanthone skeleton via methylesterification by the methyltransferase AacuQ, followed by the action of the flavin-dependent monooxygenase AacuC, the isomerase AacuP, and the short chain dehydrogenase/reductase AacuF or AacuD. AacuF and AacuD should accept the same compound as a substrate but perform the ketoreduction with a different stereoselectivity, thus yielding blennolides B and A, respectively. In the final step of the biosynthesis, the cytochrome P450 monooxygenase AacuE accepts blennolide B and/or blennolide A to conduct the dimerization reaction to furnish the tetrahydroxanthone dimers, secalonic acids D, B, and F. The sequence is that of Scytalone dehydratase-like protein AacuK from Aspergillus aculeatus (strain ATCC 16872 / CBS 172.66 / WB 5094).